A 147-amino-acid polypeptide reads, in one-letter code: Thyrotropin subunit beta (147 aa).

Residues 1–20 (MRVVLLASGVLCLLAGQVLS) form the signal peptide. 6 cysteine pairs are disulfide-bonded: Cys22-Cys72, Cys36-Cys87, Cys39-Cys126, Cys47-Cys103, Cys51-Cys105, and Cys108-Cys115. N-linked (GlcNAc...) asparagine glycosylation is present at Asn43.

It belongs to the glycoprotein hormones subunit beta family. As to quaternary structure, heterodimer of a common alpha chain and a unique beta chain which confers biological specificity to thyrotropin, lutropin, follitropin and gonadotropin.

The protein resides in the secreted. Functionally, indispensable for the control of thyroid structure and metabolism. May play some role in the biological processes of the immature fishes. In Anguilla japonica (Japanese eel), this protein is Thyrotropin subunit beta (tshb).